The following is a 426-amino-acid chain: uncharacterized protein (426 aa).

The first 23 residues, 1 to 23, serve as a signal peptide directing secretion; the sequence is MKKFILFLIILLFSIYFLNVSSA.

This is an uncharacterized protein from Methanocaldococcus jannaschii (strain ATCC 43067 / DSM 2661 / JAL-1 / JCM 10045 / NBRC 100440) (Methanococcus jannaschii).